Consider the following 120-residue polypeptide: Ribonuclease P protein component (120 aa).

Belongs to the RnpA family. As to quaternary structure, consists of a catalytic RNA component (M1 or rnpB) and a protein subunit.

It catalyses the reaction Endonucleolytic cleavage of RNA, removing 5'-extranucleotides from tRNA precursor.. RNaseP catalyzes the removal of the 5'-leader sequence from pre-tRNA to produce the mature 5'-terminus. It can also cleave other RNA substrates such as 4.5S RNA. The protein component plays an auxiliary but essential role in vivo by binding to the 5'-leader sequence and broadening the substrate specificity of the ribozyme. This is Ribonuclease P protein component from Chlamydia trachomatis serovar D (strain ATCC VR-885 / DSM 19411 / UW-3/Cx).